Consider the following 156-residue polypeptide: Small ribosomal subunit protein uS7 (156 aa).

It belongs to the universal ribosomal protein uS7 family. In terms of assembly, part of the 30S ribosomal subunit. Contacts proteins S9 and S11.

One of the primary rRNA binding proteins, it binds directly to 16S rRNA where it nucleates assembly of the head domain of the 30S subunit. Is located at the subunit interface close to the decoding center, probably blocks exit of the E-site tRNA. This is Small ribosomal subunit protein uS7 from Mesorhizobium japonicum (strain LMG 29417 / CECT 9101 / MAFF 303099) (Mesorhizobium loti (strain MAFF 303099)).